Here is a 507-residue protein sequence, read N- to C-terminus: MAEEQAYHVSKGLECLKALRENPPDIEEIQEVSSLRDQTCNPGQENGTTGMQEEEDSQNLDESHEPTKGSNYVGHVPQNNPGCGERNTALVEAERPPREDIQPGPGIRCDHVYDHSGEEVKGIEDADSLVVPAGTVGNRGFERGEGSLDDSTEDSGEDYSEGNASSNWGYSFGLKPDRAADVSMLMEEELSALLRTSRNVGIQKRDGKTLQFPHNPEVRQGIRSVDPLKRGTEERSVSHGMGIVAGSTSGATQSALKSTGGSSEPSVSAGNVRQPAMNAKMTQKCKLESGTQLPPRTSNEAESDSEYDDELFSEIQEIRSAITKLTEDNQAILTKLDTLLLLKGETDSIKKQISKQNIAISTIEGHLSSIMIAIPGFGKDTGDPTANVDINPELRPIIGRDSGRPLAEVLKQPASSRGNRKDSGITLGSKGQLLRDLQLKPIDKESSSAIGYKPKDTAPSKAVLASLIRSSRVDQSHKHNMLALLKNIKGDDNLNEFYQMVKSITHA.

Positions 31 to 51 are enriched in polar residues; sequence EVSSLRDQTCNPGQENGTTGM. Disordered regions lie at residues 31 to 86, 123 to 172, and 242 to 307; these read EVSS…CGER, IEDA…GYSF, and GIVA…DSEY. Residues 147 to 160 are compositionally biased toward acidic residues; that stretch reads SLDDSTEDSGEDYS. Position 151 is a phosphoserine (Ser151). Composition is skewed to polar residues over residues 246–271 and 289–300; these read GSTS…SAGN and SGTQLPPRTSNE. Residues 304–376 form a multimerization region; sequence DSEYDDELFS…LSSIMIAIPG (73 aa). The stretch at 310–339 forms a coiled coil; the sequence is ELFSEIQEIRSAITKLTEDNQAILTKLDTL. The segment at 459 to 507 is interaction with the nucleocapsid (N-RNA); it reads PSKAVLASLIRSSRVDQSHKHNMLALLKNIKGDDNLNEFYQMVKSITHA.

It belongs to the morbillivirus P protein family. Homotetramer. Interacts (via multimerization domain) with polymerase L; this interaction forms the polymerase L-P complex. Interacts (via N-terminus) with N0 (via Ncore); this interaction allows P to chaperon N0 to avoid N polymerization before encapsidation. Interacts (via C-terminus) with N-RNA template; this interaction positions the polymerase on the template for both transcription and replication. Phosphorylation on serines by host CK2 is necessary for the formation of viral factories.

Its function is as follows. Essential cofactor of the RNA polymerase L that plays a central role in the transcription and replication by forming the polymerase complex with RNA polymerase L and recruiting L to the genomic N-RNA template for RNA synthesis. Also plays a central role in the encapsidation of nascent RNA chains by forming the encapsidation complex with the nucleocapsid protein N (N-P complex). Acts as a chaperone for newly synthesized free N protein, so-called N0, allowing encapsidation of nascent RNA chains during replication. The nucleoprotein protein N prevents excessive phosphorylation of P, which leads to down-regulation of viral transcription/ replication. Participates, together with N, in the formation of viral factories (viroplasms), which are large inclusions in the host cytoplasm where replication takes place. The polypeptide is Phosphoprotein (P/V) (Canine distemper virus (strain Onderstepoort) (CDV)).